We begin with the raw amino-acid sequence, 111 residues long: SPbeta prophage-derived uncharacterized protein YolC (111 aa).

An N-terminal signal peptide occupies residues 1–25; that stretch reads MKKRLIGFLVLVPALIMSGITLIEA.

The sequence is that of SPbeta prophage-derived uncharacterized protein YolC (yolC) from Bacillus subtilis (strain 168).